Consider the following 77-residue polypeptide: uncharacterized protein (77 aa).

Residues 53 to 77 (KRVSSEANKEKSDITELLRKQVRPD) are disordered.

This is an uncharacterized protein from Escherichia coli (strain K12).